The primary structure comprises 415 residues: D-serine dehydratase (415 aa).

Lys-68 carries the post-translational modification N6-(pyridoxal phosphate)lysine. Pyridoxal 5'-phosphate-binding residues include Tyr-204, Tyr-211, Thr-253, Gly-279, and Asn-280. 2 residues coordinate Zn(2+): His-385 and Cys-387.

It belongs to the DSD1 family. In terms of assembly, homodimer. It depends on pyridoxal 5'-phosphate as a cofactor. The cofactor is Zn(2+).

The protein resides in the cytoplasm. It is found in the nucleus. The catalysed reaction is D-serine = pyruvate + NH4(+). Its function is as follows. Catalyzes the conversion of D-serine to pyruvate and ammonia. May play a role in D-serine detoxification. The protein is D-serine dehydratase of Schizosaccharomyces pombe (strain 972 / ATCC 24843) (Fission yeast).